Here is a 106-residue protein sequence, read N- to C-terminus: CDGSH iron-sulfur domain-containing protein 1 (106 aa).

Ser2 is subject to N-acetylserine. A helical; Signal-anchor for type III membrane protein transmembrane segment spans residues Glu10 to Tyr29. Residues Lys30–Thr106 are Cytoplasmic-facing. Residue Lys40 forms a Glycyl lysine isopeptide (Lys-Gly) (interchain with G-Cter in ubiquitin) linkage. Lys53 functions as the Schiff-base intermediate with pyridoxal 5'-phosphate in the catalytic mechanism. N6-acetyllysine; alternate occurs at positions 53 and 66. Residues Lys53 and Lys66 each participate in a glycyl lysine isopeptide (Lys-Gly) (interchain with G-Cter in ubiquitin); alternate cross-link. Cys70 and Cys72 together coordinate [2Fe-2S] cluster. Glycyl lysine isopeptide (Lys-Gly) (interchain with G-Cter in ubiquitin) cross-links involve residues Lys76 and Lys77. [2Fe-2S] cluster is bound by residues Cys81 and His85. The tract at residues Ser84–Thr106 is disordered. Lys87 is covalently cross-linked (Glycyl lysine isopeptide (Lys-Gly) (interchain with G-Cter in ubiquitin)). Lys102 is modified (N6-acetyllysine; alternate). A Glycyl lysine isopeptide (Lys-Gly) (interchain with G-Cter in ubiquitin); alternate cross-link involves residue Lys102. Residues Lys103 and Lys104 each participate in a glycyl lysine isopeptide (Lys-Gly) (interchain with G-Cter in ubiquitin) cross-link.

This sequence belongs to the CISD protein family. Homodimer. [2Fe-2S] cluster is required as a cofactor. Requires pyridoxal 5'-phosphate as cofactor. In terms of processing, ubiquitinated by PRKN during mitophagy, leading to its degradation and enhancement of mitophagy. Deubiquitinated by USP30.

The protein localises to the mitochondrion outer membrane. The catalysed reaction is L-cysteine + 2-oxoglutarate = 2-oxo-3-sulfanylpropanoate + L-glutamate. Functionally, L-cysteine transaminase that catalyzes the reversible transfer of the amino group from L-cysteine to the alpha-keto acid 2-oxoglutarate to respectively form 2-oxo-3-sulfanylpropanoate and L-glutamate. The catalytic cycle occurs in the presence of pyridoxal 5'-phosphate (PLP) cofactor that facilitates transamination by initially forming an internal aldimine with the epsilon-amino group of active site Lys-55 residue on the enzyme (PLP-enzyme aldimine), subsequently displaced by formation of an external aldimine with the substrate amino group (PLP-L-cysteine aldimine). The external aldimine is further deprotonated to form a carbanion intermediate, which in the presence of 2-oxoglutarate regenerates PLP yielding final products 2-oxo-3-sulfanylpropanoate and L-glutamate. The proton transfer in carbanion intermediate is suggested to be controlled by the active site lysine residue, whereas PLP stabilizes carbanion structure through electron delocalization, also known as the electron sink effect. Plays a key role in regulating maximal capacity for electron transport and oxidative phosphorylation. May be involved in iron-sulfur cluster shuttling and/or in redox reactions. Can transfer the [2Fe-2S] cluster to an apo-acceptor protein only when in the oxidation state, likely serving as a redox sensor that regulates mitochondrial iron-sulfur cluster assembly and iron trafficking upon oxidative stress. The polypeptide is CDGSH iron-sulfur domain-containing protein 1 (CISD1) (Bos taurus (Bovine)).